A 110-amino-acid polypeptide reads, in one-letter code: Large ribosomal subunit protein uL22 (110 aa).

This sequence belongs to the universal ribosomal protein uL22 family. As to quaternary structure, part of the 50S ribosomal subunit.

Its function is as follows. This protein binds specifically to 23S rRNA; its binding is stimulated by other ribosomal proteins, e.g. L4, L17, and L20. It is important during the early stages of 50S assembly. It makes multiple contacts with different domains of the 23S rRNA in the assembled 50S subunit and ribosome. The globular domain of the protein is located near the polypeptide exit tunnel on the outside of the subunit, while an extended beta-hairpin is found that lines the wall of the exit tunnel in the center of the 70S ribosome. The chain is Large ribosomal subunit protein uL22 from Yersinia pseudotuberculosis serotype O:1b (strain IP 31758).